The primary structure comprises 293 residues: Small ribosomal subunit biogenesis GTPase RsgA (293 aa).

Positions 63–223 (KNWLVRPPIA…VADTPGFSAL (161 aa)) constitute a CP-type G domain. Residues 112 to 115 (NKMD) and 166 to 174 (GQSGVGKSS) contribute to the GTP site. Residues Cys-247, Cys-252, His-254, and Cys-260 each contribute to the Zn(2+) site.

This sequence belongs to the TRAFAC class YlqF/YawG GTPase family. RsgA subfamily. In terms of assembly, monomer. Associates with 30S ribosomal subunit, binds 16S rRNA. Zn(2+) serves as cofactor.

The protein resides in the cytoplasm. One of several proteins that assist in the late maturation steps of the functional core of the 30S ribosomal subunit. Helps release RbfA from mature subunits. May play a role in the assembly of ribosomal proteins into the subunit. Circularly permuted GTPase that catalyzes slow GTP hydrolysis, GTPase activity is stimulated by the 30S ribosomal subunit. The chain is Small ribosomal subunit biogenesis GTPase RsgA from Geobacillus sp. (strain WCH70).